We begin with the raw amino-acid sequence, 55 residues long: Sec-independent protein translocase protein TatA (55 aa).

A helical transmembrane segment spans residues 1–21 (MSLGPWQLFLVLIIILVLFGA).

It belongs to the TatA/E family. As to quaternary structure, the Tat system comprises two distinct complexes: a TatABC complex, containing multiple copies of TatA, TatB and TatC subunits, and a separate TatA complex, containing only TatA subunits. Substrates initially bind to the TatABC complex, which probably triggers association of the separate TatA complex to form the active translocon.

Its subcellular location is the cell membrane. Its function is as follows. Part of the twin-arginine translocation (Tat) system that transports large folded proteins containing a characteristic twin-arginine motif in their signal peptide across membranes. TatA could form the protein-conducting channel of the Tat system. The sequence is that of Sec-independent protein translocase protein TatA from Wolbachia pipientis wMel.